We begin with the raw amino-acid sequence, 121 residues long: UPF0045 protein sll0230 (121 aa).

Belongs to the UPF0045 family.

This chain is UPF0045 protein sll0230, found in Synechocystis sp. (strain ATCC 27184 / PCC 6803 / Kazusa).